Reading from the N-terminus, the 59-residue chain is UPF0337 protein MM_2677 (59 aa).

Composition is skewed to basic and acidic residues over residues 1–24 (MKEG…KESA) and 33–59 (MEAK…EFEK). Positions 1–59 (MKEGTKEEMEGKFSKAKGEIKESAGEMTGDIEMEAKGEAEKRKGEAQEKVGKIRKEFEK) are disordered.

The protein belongs to the UPF0337 (CsbD) family.

In Methanosarcina mazei (strain ATCC BAA-159 / DSM 3647 / Goe1 / Go1 / JCM 11833 / OCM 88) (Methanosarcina frisia), this protein is UPF0337 protein MM_2677.